Consider the following 401-residue polypeptide: Chorismate synthase (401 aa).

Arginine 40 and arginine 46 together coordinate NADP(+). Residues 135-137 (RAS), 256-257 (QA), glycine 300, 315-319 (KPIST), and arginine 341 contribute to the FMN site.

This sequence belongs to the chorismate synthase family. Homotetramer. FMNH2 is required as a cofactor.

It carries out the reaction 5-O-(1-carboxyvinyl)-3-phosphoshikimate = chorismate + phosphate. Its pathway is metabolic intermediate biosynthesis; chorismate biosynthesis; chorismate from D-erythrose 4-phosphate and phosphoenolpyruvate: step 7/7. Catalyzes the anti-1,4-elimination of the C-3 phosphate and the C-6 proR hydrogen from 5-enolpyruvylshikimate-3-phosphate (EPSP) to yield chorismate, which is the branch point compound that serves as the starting substrate for the three terminal pathways of aromatic amino acid biosynthesis. This reaction introduces a second double bond into the aromatic ring system. This is Chorismate synthase from Mycobacterium bovis (strain BCG / Pasteur 1173P2).